A 170-amino-acid chain; its full sequence is Neurotensin/neuromedin N (170 aa).

The N-terminal stretch at 1–23 is a signal peptide; the sequence is MMAGMKIQLVCMLLLAFSSWSLC. A Pyrrolidone carboxylic acid modification is found at Gln151.

The protein belongs to the neurotensin family. In terms of assembly, interacts with NTSR1. Interacts with SORT1. Interacts with SORL1. In terms of processing, neurotensin is cleaved and degraded by Angiotensin-converting enzyme (ACE) and neprilysin (MME).

It localises to the secreted. Its subcellular location is the cytoplasmic vesicle. The protein localises to the secretory vesicle. Its function is as follows. Neurotensin may play an endocrine or paracrine role in the regulation of fat metabolism. It causes contraction of smooth muscle. The polypeptide is Neurotensin/neuromedin N (NTS) (Homo sapiens (Human)).